Here is a 278-residue protein sequence, read N- to C-terminus: Large ribosomal subunit protein uL2 (278 aa).

Residues 223–278 are disordered; it reads GVAMNPIDHPHGGGEGRTSGGRHPVTPWGFPTKGKKTRSNKRTDTFIVSSRHNRKK.

The protein belongs to the universal ribosomal protein uL2 family. As to quaternary structure, part of the 50S ribosomal subunit. Forms a bridge to the 30S subunit in the 70S ribosome.

Its function is as follows. One of the primary rRNA binding proteins. Required for association of the 30S and 50S subunits to form the 70S ribosome, for tRNA binding and peptide bond formation. It has been suggested to have peptidyltransferase activity; this is somewhat controversial. Makes several contacts with the 16S rRNA in the 70S ribosome. This is Large ribosomal subunit protein uL2 from Methylobacterium sp. (strain 4-46).